Reading from the N-terminus, the 108-residue chain is Heme oxygenase (staphylobilin-producing) (108 aa).

The ABM domain maps to 2–93 (FMAENRLQLQ…DDDGQQSPIL (92 aa)). Asparagine 6 serves as a coordination point for Fe cation. Residues 21–28 (RFYNRQGI) and histidine 76 each bind heme.

Belongs to the antibiotic biosynthesis monooxygenase family. Heme-degrading monooxygenase IsdG subfamily. In terms of assembly, homodimer.

The protein localises to the cytoplasm. The catalysed reaction is heme b + 5 AH2 + 4 O2 + 2 H(+) = delta-staphylobilin + Fe(2+) + formaldehyde + 5 A + 4 H2O. It carries out the reaction heme b + 5 AH2 + 4 O2 + 2 H(+) = beta-staphylobilin + Fe(2+) + formaldehyde + 5 A + 4 H2O. Allows bacterial pathogens to use the host heme as an iron source. Catalyzes the oxidative degradation of the heme macrocyclic porphyrin ring to the oxo-bilirubin chromophore staphylobilin (a mixture of the linear tetrapyrroles 5-oxo-delta-bilirubin and 15-oxo-beta-bilirubin) in the presence of a suitable electron donor such as ascorbate or NADPH--cytochrome P450 reductase, with subsequent release of free iron. This is Heme oxygenase (staphylobilin-producing) (isdI) from Staphylococcus aureus (strain Mu3 / ATCC 700698).